Here is a 142-residue protein sequence, read N- to C-terminus: Group IIE secretory phospholipase A2 (142 aa).

An N-terminal signal peptide occupies residues 1–19 (MKPPIALACLCLLVPLAGG). Ca(2+) is bound by residues Asp41, Gly43, Tyr45, Gly47, and Gly49. Disulfide bonds link Cys44–Cys135, Cys46–Cys62, Cys61–Cys115, Cys67–Cys142, Cys68–Cys108, Cys77–Cys101, and Cys95–Cys106. The active site involves His65. Asp66 is a binding site for Ca(2+). Residue Asp109 is part of the active site. Positions 130 and 132 each coordinate Ca(2+).

It belongs to the phospholipase A2 family. Ca(2+) serves as cofactor. Highly expressed in skin and uterus, and at lower levels in various other tissues. Expressed in hair follicles, specifically localized in companion cells of the outer root sheath and cuticular cells of the inner root sheath in hair follicles during anagen. Expressed in white and brown adipose tissue.

Its subcellular location is the secreted. The protein resides in the cytoplasm. The catalysed reaction is a 1,2-diacyl-sn-glycero-3-phosphoethanolamine + H2O = a 1-acyl-sn-glycero-3-phosphoethanolamine + a fatty acid + H(+). It carries out the reaction 1-hexadecanoyl-2-(9Z-octadecenoyl)-sn-glycero-3-phosphoethanolamine + H2O = 1-hexadecanoyl-sn-glycero-3-phosphoethanolamine + (9Z)-octadecenoate + H(+). It catalyses the reaction 1-hexadecanoyl-2-(9Z,12Z-octadecadienoyl)-sn-glycero-3-phosphoethanolamine + H2O = 1-hexadecanoyl-sn-glycero-3-phosphoethanolamine + (9Z,12Z)-octadecadienoate + H(+). The enzyme catalyses 1-hexadecanoyl-2-(5Z,8Z,11Z,14Z-eicosatetraenoyl)-sn-glycero-3-phosphoethanolamine + H2O = 1-hexadecanoyl-sn-glycero-3-phosphoethanolamine + (5Z,8Z,11Z,14Z)-eicosatetraenoate + H(+). The catalysed reaction is 1,2-dihexadecanoyl-sn-glycero-3-phospho-(1'-sn-glycerol) + H2O = 1-hexadecanoyl-sn-glycero-3-phospho-(1'-sn-glycerol) + hexadecanoate + H(+). It carries out the reaction 1-hexadecanoyl-2-(9Z-octadecenoyl)-sn-glycero-3-phosphoglycerol + H2O = 1-hexadecanoyl-sn-glycero-3-phosphoglycerol + (9Z)-octadecenoate + H(+). It catalyses the reaction a 1,2-diacyl-sn-glycero-3-phosphocholine + H2O = a 1-acyl-sn-glycero-3-phosphocholine + a fatty acid + H(+). The enzyme catalyses 1,2-dihexadecanoyl-sn-glycero-3-phosphocholine + H2O = 1-hexadecanoyl-sn-glycero-3-phosphocholine + hexadecanoate + H(+). The catalysed reaction is 1-hexadecanoyl-2-(9Z-octadecenoyl)-sn-glycero-3-phosphocholine + H2O = 1-hexadecanoyl-sn-glycero-3-phosphocholine + (9Z)-octadecenoate + H(+). It carries out the reaction 1-hexadecanoyl-2-(9Z,12Z-octadecadienoyl)-sn-glycero-3-phosphocholine + H2O = (9Z,12Z)-octadecadienoate + 1-hexadecanoyl-sn-glycero-3-phosphocholine + H(+). It catalyses the reaction 1-hexadecanoyl-2-(4Z,7Z,10Z,13Z,16Z,19Z-docosahexaenoyl)-sn-glycero-3-phosphocholine + H2O = (4Z,7Z,10Z,13Z,16Z,19Z)-docosahexaenoate + 1-hexadecanoyl-sn-glycero-3-phosphocholine + H(+). In terms of biological role, secretory calcium-dependent phospholipase A2 that primarily targets extracellular phospholipids. Hydrolyzes the ester bond of the fatty acyl group attached at sn-2 position of phospholipids (phospholipase A2 activity), releasing various unsaturated fatty acids including oleoate, linoleoate, arachidonate, docosahexaenoate and lysophosphatidylethanolamines in preference to lysophosphatidylcholines. In response to high-fat diet, hydrolyzes minor lipoprotein phospholipids including phosphatidylserines, phosphatidylinositols and phosphatidylglycerols, altering lipoprotein composition and fat storage in adipose tissue and liver. May act in an autocrine and paracrine manner. Contributes to lipid remodeling of cellular membranes and generation of lipid mediators involved in pathogen clearance. Cleaves sn-2 fatty acyl chains of phosphatidylglycerols and phosphatidylethanolamines, which are major components of membrane phospholipids in bacteria. Acts as a hair follicle phospholipase A2. Selectively releases lysophosphatidylethanolamines (LPE) and various unsaturated fatty acids in skin to regulate hair follicle homeostasis. May regulate the inflammatory response by releasing arachidonate, a precursor of prostaglandins and leukotrienes. Upon allergen exposure, may participate in allergic inflammatory response by enhancing leukotriene C4 synthesis and degranulation in mast cells. This Mus musculus (Mouse) protein is Group IIE secretory phospholipase A2 (Pla2g2e).